The primary structure comprises 133 residues: Small ribosomal subunit protein uS8 (133 aa).

Belongs to the universal ribosomal protein uS8 family. In terms of assembly, part of the 30S ribosomal subunit. Contacts proteins S5 and S12.

In terms of biological role, one of the primary rRNA binding proteins, it binds directly to 16S rRNA central domain where it helps coordinate assembly of the platform of the 30S subunit. The sequence is that of Small ribosomal subunit protein uS8 from Protochlamydia amoebophila (strain UWE25).